The primary structure comprises 235 residues: Flagellar L-ring protein (235 aa).

The signal sequence occupies residues 1-18 (MNKIAGTLFLLAGLAMAG). A lipid anchor (N-palmitoyl cysteine) is attached at Cys-19. Residue Cys-19 is the site of S-diacylglycerol cysteine attachment.

This sequence belongs to the FlgH family. As to quaternary structure, the basal body constitutes a major portion of the flagellar organelle and consists of four rings (L,P,S, and M) mounted on a central rod.

The protein resides in the cell outer membrane. It localises to the bacterial flagellum basal body. Assembles around the rod to form the L-ring and probably protects the motor/basal body from shearing forces during rotation. This Chelativorans sp. (strain BNC1) protein is Flagellar L-ring protein.